Reading from the N-terminus, the 315-residue chain is 4-hydroxy-3-methylbut-2-enyl diphosphate reductase (315 aa).

Cysteine 12 serves as a coordination point for [4Fe-4S] cluster. The (2E)-4-hydroxy-3-methylbut-2-enyl diphosphate site is built by histidine 43 and histidine 81. Dimethylallyl diphosphate contacts are provided by histidine 43 and histidine 81. Histidine 43 and histidine 81 together coordinate isopentenyl diphosphate. Cysteine 103 is a binding site for [4Fe-4S] cluster. Residue histidine 131 coordinates (2E)-4-hydroxy-3-methylbut-2-enyl diphosphate. Histidine 131 is a binding site for dimethylallyl diphosphate. Histidine 131 is a binding site for isopentenyl diphosphate. Residue glutamate 133 is the Proton donor of the active site. Position 170 (threonine 170) interacts with (2E)-4-hydroxy-3-methylbut-2-enyl diphosphate. Residue cysteine 198 participates in [4Fe-4S] cluster binding. Serine 226, asparagine 228, and serine 271 together coordinate (2E)-4-hydroxy-3-methylbut-2-enyl diphosphate. Positions 226, 228, and 271 each coordinate dimethylallyl diphosphate. Positions 226, 228, and 271 each coordinate isopentenyl diphosphate.

This sequence belongs to the IspH family. The cofactor is [4Fe-4S] cluster.

The enzyme catalyses isopentenyl diphosphate + 2 oxidized [2Fe-2S]-[ferredoxin] + H2O = (2E)-4-hydroxy-3-methylbut-2-enyl diphosphate + 2 reduced [2Fe-2S]-[ferredoxin] + 2 H(+). The catalysed reaction is dimethylallyl diphosphate + 2 oxidized [2Fe-2S]-[ferredoxin] + H2O = (2E)-4-hydroxy-3-methylbut-2-enyl diphosphate + 2 reduced [2Fe-2S]-[ferredoxin] + 2 H(+). It functions in the pathway isoprenoid biosynthesis; dimethylallyl diphosphate biosynthesis; dimethylallyl diphosphate from (2E)-4-hydroxy-3-methylbutenyl diphosphate: step 1/1. Its pathway is isoprenoid biosynthesis; isopentenyl diphosphate biosynthesis via DXP pathway; isopentenyl diphosphate from 1-deoxy-D-xylulose 5-phosphate: step 6/6. Catalyzes the conversion of 1-hydroxy-2-methyl-2-(E)-butenyl 4-diphosphate (HMBPP) into a mixture of isopentenyl diphosphate (IPP) and dimethylallyl diphosphate (DMAPP). Acts in the terminal step of the DOXP/MEP pathway for isoprenoid precursor biosynthesis. The sequence is that of 4-hydroxy-3-methylbut-2-enyl diphosphate reductase from Bacillus cytotoxicus (strain DSM 22905 / CIP 110041 / 391-98 / NVH 391-98).